Here is a 484-residue protein sequence, read N- to C-terminus: UDP-N-acetylmuramate--L-alanine ligase (484 aa).

Residue 127–133 (GTHGKTT) coordinates ATP.

Belongs to the MurCDEF family.

The protein resides in the cytoplasm. It carries out the reaction UDP-N-acetyl-alpha-D-muramate + L-alanine + ATP = UDP-N-acetyl-alpha-D-muramoyl-L-alanine + ADP + phosphate + H(+). It functions in the pathway cell wall biogenesis; peptidoglycan biosynthesis. In terms of biological role, cell wall formation. In Shewanella amazonensis (strain ATCC BAA-1098 / SB2B), this protein is UDP-N-acetylmuramate--L-alanine ligase.